Here is an 800-residue protein sequence, read N- to C-terminus: Aldehyde dehydrogenase family 16 member A1 (800 aa).

This sequence belongs to the aldehyde dehydrogenase family. As to quaternary structure, interacts with SPG21.

The sequence is that of Aldehyde dehydrogenase family 16 member A1 (ALDH16A1) from Bos taurus (Bovine).